An 84-amino-acid polypeptide reads, in one-letter code: Small ribosomal subunit protein uS17 (84 aa).

Belongs to the universal ribosomal protein uS17 family. In terms of assembly, part of the 30S ribosomal subunit.

One of the primary rRNA binding proteins, it binds specifically to the 5'-end of 16S ribosomal RNA. The protein is Small ribosomal subunit protein uS17 of Clostridium kluyveri (strain NBRC 12016).